A 520-amino-acid polypeptide reads, in one-letter code: Cytochrome P450 1A1 (520 aa).

F230 lines the substrate pocket. C464 is a heme binding site.

The protein belongs to the cytochrome P450 family. The cofactor is heme.

The protein localises to the endoplasmic reticulum membrane. Its subcellular location is the microsome membrane. It carries out the reaction an organic molecule + reduced [NADPH--hemoprotein reductase] + O2 = an alcohol + oxidized [NADPH--hemoprotein reductase] + H2O + H(+). Functionally, cytochromes P450 are a group of heme-thiolate monooxygenases. In liver microsomes, this enzyme is involved in an NADPH-dependent electron transport pathway. It oxidizes a variety of structurally unrelated compounds, including steroids, fatty acids, and xenobiotics. In Dicentrarchus labrax (European seabass), this protein is Cytochrome P450 1A1 (cyp1a1).